The following is a 378-amino-acid chain: MRRHHLLGLLRRAAASSTSAASSRAGPHPSLHAPGPLRNGGSAPRFFSSRGGAGAASKGLGDDEVELYSLLLGVSIGDEGEASSRGPAASRGGRRGRNSKRQPPRSRFDGDGVGCSKDGKLSWGYSSFQGRRPSMEDRLSIKSTTVNGETVSLFGVFDGHGGPRAAEYLKKHLFKNLVKHPKFLKDTKLAINQTFLKTDADFLQSISSDRYRDDGSTAVAAILIGNRLYVANVGDSRAVALKAGKAVPLSEDHKPNKKDERKRIEDAGGIVVSDDIWRVDGILAVSRAFGNRLMKRYVKAEPNIQEKVVDEGLEYLVLATDGLWDVMRNEDAVSLLKAQDGPKAAAMKLTEVARSRLTLDNVTCIVLQFHHGKSTNSK.

Disordered stretches follow at residues 1–59 (MRRH…ASKG) and 79–115 (EGEASSRGPAASRGGRRGRNSKRQPPRSRFDGDGVGC). Over residues 7–26 (LGLLRRAAASSTSAASSRAG) the composition is skewed to low complexity. Positions 92–104 (GGRRGRNSKRQPP) are enriched in basic residues. The PPM-type phosphatase domain occupies 122–369 (SWGYSSFQGR…DNVTCIVLQF (248 aa)). Mn(2+) contacts are provided by Asp158, Gly159, Asp321, and Asp360.

It belongs to the PP2C family. The cofactor is Mg(2+). Mn(2+) serves as cofactor.

It carries out the reaction O-phospho-L-seryl-[protein] + H2O = L-seryl-[protein] + phosphate. The enzyme catalyses O-phospho-L-threonyl-[protein] + H2O = L-threonyl-[protein] + phosphate. This chain is Probable protein phosphatase 2C 55, found in Oryza sativa subsp. japonica (Rice).